The following is a 144-amino-acid chain: Ribosomal RNA large subunit methyltransferase H (144 aa).

Residues leucine 63, glycine 92, and 111 to 116 (LSPLTF) contribute to the S-adenosyl-L-methionine site.

This sequence belongs to the RNA methyltransferase RlmH family. As to quaternary structure, homodimer.

It is found in the cytoplasm. It carries out the reaction pseudouridine(1915) in 23S rRNA + S-adenosyl-L-methionine = N(3)-methylpseudouridine(1915) in 23S rRNA + S-adenosyl-L-homocysteine + H(+). In terms of biological role, specifically methylates the pseudouridine at position 1915 (m3Psi1915) in 23S rRNA. In Synechococcus sp. (strain CC9902), this protein is Ribosomal RNA large subunit methyltransferase H.